A 33-amino-acid polypeptide reads, in one-letter code: Cytochrome b6-f complex subunit 8 (33 aa).

A helical transmembrane segment spans residues Leu2 to Val22.

This sequence belongs to the PetN family. In terms of assembly, the 4 large subunits of the cytochrome b6-f complex are cytochrome b6, subunit IV (17 kDa polypeptide, PetD), cytochrome f and the Rieske protein, while the 4 small subunits are PetG, PetL, PetM and PetN. The complex functions as a dimer.

The protein resides in the cellular thylakoid membrane. Its function is as follows. Component of the cytochrome b6-f complex, which mediates electron transfer between photosystem II (PSII) and photosystem I (PSI), cyclic electron flow around PSI, and state transitions. The chain is Cytochrome b6-f complex subunit 8 from Synechococcus sp. (strain CC9311).